Reading from the N-terminus, the 319-residue chain is MEPILAPNPNRFVIFPIQYYDIWNMYKKAEASFWTVEEVDISKDINDWNKLTPDEKYFIKHVLAFFAASDGIVNENLAERFCTEVQITEARCFYGFQMAIENIHSEMYSLLIDTYVKDSNEKNYLFNAIETMPCVKKKADWAQKWIHDSAGYGERLIAFAAVEGIFFSGSFASIFWLKKRGLMPGLTFSNELISRDEGLHCDFACLMFKHLLHPPSEETVRSIITDAVSIEQEFLTAALPVKLIGMNCEMMKTYIEFVADRLISELGFKKIYNVTNPFDFMENISLEGKTNFFEKRVGEYQKMGVMSQEDNHFSLDVDF.

Positions 70, 101, and 104 each coordinate Fe cation. The active site involves Tyr108. Fe cation contacts are provided by Glu163, Glu197, and His200. The segment at 313–319 is interaction with R1; the sequence is FSLDVDF.

The protein belongs to the ribonucleoside diphosphate reductase small chain family. Interacts with RNR1/OPG080 subunit. Can interact with host RNR1 supunit. Fe cation is required as a cofactor.

It carries out the reaction a 2'-deoxyribonucleoside 5'-diphosphate + [thioredoxin]-disulfide + H2O = a ribonucleoside 5'-diphosphate + [thioredoxin]-dithiol. Its function is as follows. Ribonucleoside-diphosphate reductase holoenzyme provides the precursors necessary for viral DNA synthesis. Allows virus growth in non-dividing cells. Catalyzes the biosynthesis of deoxyribonucleotides from the corresponding ribonucleotides. This Bos taurus (Bovine) protein is Ribonucleoside-diphosphate reductase small chain (OPG048).